Reading from the N-terminus, the 484-residue chain is Ornithine decarboxylase (484 aa).

At K114 the chain carries N6-(pyridoxal phosphate)lysine. Pyridoxal 5'-phosphate-binding positions include S245, G282, and 315–318 (EPGR). Residue 381 to 382 (FD) coordinates substrate. C422 functions as the Proton donor; shared with dimeric partner in the catalytic mechanism. Residue D423 coordinates substrate. Position 452 (Y452) interacts with pyridoxal 5'-phosphate.

Belongs to the Orn/Lys/Arg decarboxylase class-II family. As to quaternary structure, homodimer. Only the dimer is catalytically active, as the active sites are constructed of residues from both monomers. It depends on pyridoxal 5'-phosphate as a cofactor.

It localises to the cytoplasm. The catalysed reaction is L-ornithine + H(+) = putrescine + CO2. It functions in the pathway amine and polyamine biosynthesis; putrescine biosynthesis via L-ornithine pathway; putrescine from L-ornithine: step 1/1. Its activity is regulated as follows. Inhibited by antizyme (AZ) OAZ1 in response to polyamine levels. AZ inhibits the assembly of the functional homodimer by binding to ODC monomers and targeting them for ubiquitin-independent proteolytic destruction by the 26S proteasome. Its function is as follows. Catalyzes the first and rate-limiting step of polyamine biosynthesis that converts ornithine into putrescine, which is the precursor for the polyamines, spermidine and spermine. Polyamines are essential for cell proliferation and are implicated in cellular processes, ranging from DNA replication to apoptosis. The chain is Ornithine decarboxylase (spe-1) from Neurospora crassa (strain ATCC 24698 / 74-OR23-1A / CBS 708.71 / DSM 1257 / FGSC 987).